Here is a 397-residue protein sequence, read N- to C-terminus: DNA excision repair protein ERCC-8 (397 aa).

5 WD repeats span residues 41–81, 97–137, 184–224, 243–282, and 332–371; these read IHGS…RQPH, VHKY…AADV, GHRQ…GCLL, AHNG…NTLV, and GHYK…PVPD. Residues S391, S392, and S393 each carry the phosphoserine modification.

In terms of assembly, part of the CSA complex (also named DCX(ERCC8) complex), a DCX E3 ubiquitin-protein ligase complex containing ERCC8, RBX1, DDB1 and CUL4A; the CSA complex interacts with RNA polymerase II; upon UV irradiation it interacts with the COP9 signalosome and preferentially with the hyperphosphorylated form of RNA polymerase II. Interacts with ERCC6/CSB (via CIM motif); promoting recruitment to lesion-stalled RNA polymerase II (Pol II). Interacts with KIAA1530/UVSSA. Interacts with a subunit of RNA polymerase II TFIIH.

The protein resides in the nucleus. Its subcellular location is the chromosome. It is found in the nucleus matrix. It participates in protein modification; protein ubiquitination. Substrate-recognition component of the CSA complex, a DCX (DDB1-CUL4-X-box) E3 ubiquitin-protein ligase complex, involved in transcription-coupled nucleotide excision repair (TC-NER), a process during which RNA polymerase II-blocking lesions are rapidly removed from the transcribed strand of active genes. Following recruitment to lesion-stalled RNA polymerase II (Pol II), the CSA complex mediates ubiquitination of Pol II subunit POLR2A/RPB1 at 'Lys-1268', a critical TC-NER checkpoint, governing RNA Pol II stability and initiating DNA damage excision by TFIIH recruitment. The CSA complex also promotes the ubiquitination and subsequent proteasomal degradation of ERCC6/CSB in a UV-dependent manner; ERCC6 degradation is essential for the recovery of RNA synthesis after transcription-coupled repair. Also plays a role in DNA double-strand breaks (DSSBs) repair by non-homologous end joining (NHEJ). This is DNA excision repair protein ERCC-8 from Mus musculus (Mouse).